A 216-amino-acid polypeptide reads, in one-letter code: RNA pyrophosphohydrolase (216 aa).

A Nudix hydrolase domain is found at G6–T149. Positions G38–G59 match the Nudix box motif. Residues A159–A188 form a disordered region.

This sequence belongs to the Nudix hydrolase family. RppH subfamily. A divalent metal cation serves as cofactor.

Its function is as follows. Accelerates the degradation of transcripts by removing pyrophosphate from the 5'-end of triphosphorylated RNA, leading to a more labile monophosphorylated state that can stimulate subsequent ribonuclease cleavage. The chain is RNA pyrophosphohydrolase from Burkholderia mallei (strain NCTC 10247).